The following is a 301-amino-acid chain: Probable alpha-L-glutamate ligase (301 aa).

The region spanning 104 to 287 (LQLLSRKGIG…VAGMIVEFIE (184 aa)) is the ATP-grasp domain. Residues Lys141, 178–179 (EF), Asp187, and 211–213 (RSN) contribute to the ATP site. 3 residues coordinate Mg(2+): Asp248, Glu260, and Asn262. Mn(2+)-binding residues include Asp248, Glu260, and Asn262.

It belongs to the RimK family. Requires Mg(2+) as cofactor. Mn(2+) is required as a cofactor.

In Teredinibacter turnerae (strain ATCC 39867 / T7901), this protein is Probable alpha-L-glutamate ligase.